Here is a 206-residue protein sequence, read N- to C-terminus: Large ribosomal subunit protein uL4 (206 aa).

A disordered region spans residues 44 to 87 (KRQGTHATKTRGMKRGGGAKPWRQKGTGRARAGSTRSPLWRGGG).

Belongs to the universal ribosomal protein uL4 family. Part of the 50S ribosomal subunit.

In terms of biological role, one of the primary rRNA binding proteins, this protein initially binds near the 5'-end of the 23S rRNA. It is important during the early stages of 50S assembly. It makes multiple contacts with different domains of the 23S rRNA in the assembled 50S subunit and ribosome. Functionally, forms part of the polypeptide exit tunnel. This is Large ribosomal subunit protein uL4 from Maridesulfovibrio salexigens (strain ATCC 14822 / DSM 2638 / NCIMB 8403 / VKM B-1763) (Desulfovibrio salexigens).